We begin with the raw amino-acid sequence, 267 residues long: MSFVEELGARIEAADSVVSVGLDPDMERLPEDVQDAELPRWAFNRRIIDATHEHAAVFKPNAAFYEDSDGWRALRETVAYAHGKGVPVLLDAKRADIGNTARQYAEILAHVDAITVNPYLGEDALQPFLTQDEAGVFVLCRTSNEGGMDFQHLELAAYDRRLYEHVAERAAEWNAQYGDVGLVVGATAPDELQAIRERVPELPFLVPGVGAQGGDAEAAVEYGLNDDGVGLVNSTRGVIFAGEHGSAWAAAAGDAARTLRERLNRHR.

The active-site Proton donor is Lys93.

Belongs to the OMP decarboxylase family. Type 2 subfamily.

The enzyme catalyses orotidine 5'-phosphate + H(+) = UMP + CO2. Its pathway is pyrimidine metabolism; UMP biosynthesis via de novo pathway; UMP from orotate: step 2/2. The polypeptide is Orotidine 5'-phosphate decarboxylase (Halobacterium salinarum (strain ATCC 29341 / DSM 671 / R1)).